The following is a 342-amino-acid chain: UDP-N-acetylenolpyruvoylglucosamine reductase (342 aa).

An FAD-binding PCMH-type domain is found at I13–E183. R159 is an active-site residue. Y190 contributes to the substrate binding site. Catalysis depends on S229, which acts as the Proton donor. E325 is a catalytic residue.

This sequence belongs to the MurB family. The cofactor is FAD.

The protein resides in the cytoplasm. The catalysed reaction is UDP-N-acetyl-alpha-D-muramate + NADP(+) = UDP-N-acetyl-3-O-(1-carboxyvinyl)-alpha-D-glucosamine + NADPH + H(+). The protein operates within cell wall biogenesis; peptidoglycan biosynthesis. Its function is as follows. Cell wall formation. The protein is UDP-N-acetylenolpyruvoylglucosamine reductase of Escherichia coli O6:H1 (strain CFT073 / ATCC 700928 / UPEC).